A 100-amino-acid chain; its full sequence is Urease subunit gamma (100 aa).

It belongs to the urease gamma subunit family. As to quaternary structure, heterotrimer of UreA (gamma), UreB (beta) and UreC (alpha) subunits. Three heterotrimers associate to form the active enzyme.

It localises to the cytoplasm. The catalysed reaction is urea + 2 H2O + H(+) = hydrogencarbonate + 2 NH4(+). It functions in the pathway nitrogen metabolism; urea degradation; CO(2) and NH(3) from urea (urease route): step 1/1. The protein is Urease subunit gamma of Streptomyces griseus subsp. griseus (strain JCM 4626 / CBS 651.72 / NBRC 13350 / KCC S-0626 / ISP 5235).